Consider the following 190-residue polypeptide: MNPISLLFLALAMSTDAFAAALGKGASLHKPRFIEALRTGLIFGAIETITPVIGWGIGQVAARFAESWDHWIAFTLLLVLGLHMIYNGLKHDHEEEQEKPGSHSFWILAVTAFATSIDALAVGVGLAFVDVNIMVAALAIGLATTVMVTIGVMLGRVLGTMVGKRAEIVGGIVLIVVGTTILYEHLTAAA.

A run of 6 helical transmembrane segments spans residues Pro-3–Gly-23, Leu-41–Ala-61, Asp-69–Leu-89, Phe-105–Gly-125, Ile-133–Met-153, and Ile-168–Ala-188.

This sequence belongs to the MntP (TC 9.B.29) family.

The protein localises to the cell inner membrane. Functionally, probably functions as a manganese efflux pump. This chain is Putative manganese efflux pump MntP, found in Pseudomonas syringae pv. tomato (strain ATCC BAA-871 / DC3000).